A 760-amino-acid chain; its full sequence is Histone-lysine N-methyltransferase EZH2 (760 aa).

Disordered regions lie at residues 208–231 (KDDAEDHKEQLSSESHNNDGSKKF) and 356–444 (PERA…PENV). Over residues 361-373 (TPSKRSTGRRRGR) the composition is skewed to basic residues. Polar residues predominate over residues 375–388 (PNSNSRPSTPTVNS). Over residues 389–400 (ETKDTDSDREGG) the composition is skewed to basic and acidic residues. The 103-residue stretch at 517 to 619 (CRKIQLKKDG…SKNVSCKNCS (103 aa)) folds into the CXC domain. The 116-residue stretch at 626 to 741 (KHLLLAPSDV…TGEELFFDYR (116 aa)) folds into the SET domain.

The protein belongs to the class V-like SAM-binding methyltransferase superfamily. Histone-lysine methyltransferase family. EZ subfamily. As to quaternary structure, component of the prc2/eed-ezh2 complex.

It is found in the nucleus. It catalyses the reaction L-lysyl(27)-[histone H3] + 3 S-adenosyl-L-methionine = N(6),N(6),N(6)-trimethyl-L-lysyl(27)-[histone H3] + 3 S-adenosyl-L-homocysteine + 3 H(+). In terms of biological role, polycomb group (PcG) protein. Catalytic subunit of the prc2/eed-ezh2 complex, which methylates 'Lys-9' and 'Lys-27' of histone H3, leading to transcriptional repression of the affected target gene. May regulate the circadian clock via histone methylation at the promoter of the circadian genes. This chain is Histone-lysine N-methyltransferase EZH2 (ezh2), found in Danio rerio (Zebrafish).